A 163-amino-acid chain; its full sequence is Putative pre-16S rRNA nuclease (163 aa).

It belongs to the YqgF nuclease family.

The protein localises to the cytoplasm. Functionally, could be a nuclease involved in processing of the 5'-end of pre-16S rRNA. In Nitrobacter winogradskyi (strain ATCC 25391 / DSM 10237 / CIP 104748 / NCIMB 11846 / Nb-255), this protein is Putative pre-16S rRNA nuclease.